The following is a 502-amino-acid chain: Lysine--tRNA ligase (502 aa).

Glutamate 410 and glutamate 417 together coordinate Mg(2+).

It belongs to the class-II aminoacyl-tRNA synthetase family. Homodimer. The cofactor is Mg(2+).

It is found in the cytoplasm. The catalysed reaction is tRNA(Lys) + L-lysine + ATP = L-lysyl-tRNA(Lys) + AMP + diphosphate. The polypeptide is Lysine--tRNA ligase (Photobacterium profundum (strain SS9)).